A 256-amino-acid chain; its full sequence is Trans-aconitate 2-methyltransferase (256 aa).

It belongs to the methyltransferase superfamily. Tam family.

The protein resides in the cytoplasm. The enzyme catalyses trans-aconitate + S-adenosyl-L-methionine = (E)-3-(methoxycarbonyl)pent-2-enedioate + S-adenosyl-L-homocysteine. Catalyzes the S-adenosylmethionine monomethyl esterification of trans-aconitate. This Rhizobium leguminosarum bv. trifolii (strain WSM2304) protein is Trans-aconitate 2-methyltransferase.